Consider the following 680-residue polypeptide: Calcium-binding and coiled-coil domain-containing protein 1 (680 aa).

The p300 KIX-binding stretch occupies residues 1 to 30 (MEESSLSRAPSRGGVNFLNVARTYIPNTKV). Residues 1-190 (MEESSLSRAP…VQELEKALAA (190 aa)) form an N-terminal AD (CTNNB1 binding site) region. Residue S4 is modified to Phosphoserine. The segment at 45 to 125 (SDWIGIFKVE…FQFREPRPMD (81 aa)) is interaction with GATA1. Coiled-coil stretches lie at residues 145-205 (KATV…YKGL), 232-339 (ELEE…AELE), and 417-514 (QSVE…ADEK). Positions 501–680 (RKLEARLEKV…HTYTHTHTHA (180 aa)) are C-terminal AD (CTNNB1 binding site); interaction with CCAR1. A disordered region spans residues 511-606 (ADEKWSEDPA…DSEAEDEKSV (96 aa)). The UBZ1-type zinc-finger motif lies at 654 to 679 (WKECPICKERFPVHTQTHTYTHTHTH). Zn(2+)-binding residues include C657, C660, H675, and H679.

Belongs to the CALCOCO family. As to quaternary structure, part of a calphoglin complex consisting of CALCOCO1, PPA1 and PGM. Interacts with the bHLH-PAS domains of GRIP1, AHR and ARNT. Interacts with CTNNB1 via both its N- and C-terminal regions. Interacts with EP300. Interacts with CCAR1 (via N-terminus) and GATA1.

The protein resides in the cytoplasm. It localises to the nucleus. Functions as a coactivator for aryl hydrocarbon and nuclear receptors (NR). Recruited to promoters through its contact with the N-terminal basic helix-loop-helix-Per-Arnt-Sim (PAS) domain of transcription factors or coactivators, such as NCOA2. During ER-activation acts synergistically in combination with other NCOA2-binding proteins, such as EP300, CREBBP and CARM1. Involved in the transcriptional activation of target genes in the Wnt/CTNNB1 pathway. Functions as a secondary coactivator in LEF1-mediated transcriptional activation via its interaction with CTNNB1. Coactivator function for nuclear receptors and LEF1/CTNNB1 involves differential utilization of two different activation regions. In association with CCAR1 enhances GATA1- and MED1-mediated transcriptional activation from the gamma-globin promoter during erythroid differentiation of K562 erythroleukemia cells. Functionally, seems to enhance inorganic pyrophosphatase thus activating phosphogluomutase (PMG). Probably functions as a component of the calphoglin complex, which is involved in linking cellular metabolism (phosphate and glucose metabolism) with other core functions including protein synthesis and degradation, calcium signaling and cell growth. In Bos taurus (Bovine), this protein is Calcium-binding and coiled-coil domain-containing protein 1 (CALCOCO1).